Consider the following 95-residue polypeptide: Putative pterin-4-alpha-carbinolamine dehydratase (95 aa).

Belongs to the pterin-4-alpha-carbinolamine dehydratase family.

It carries out the reaction (4aS,6R)-4a-hydroxy-L-erythro-5,6,7,8-tetrahydrobiopterin = (6R)-L-erythro-6,7-dihydrobiopterin + H2O. This chain is Putative pterin-4-alpha-carbinolamine dehydratase, found in Prochlorococcus marinus (strain NATL2A).